The sequence spans 626 residues: Chaperone protein HtpG (626 aa).

An a; substrate-binding region spans residues 1-343 (MHKQTLSFQA…SADLPLNVSR (343 aa)). The tract at residues 344 to 558 (ELLQESRAVK…DGDMSTQLAR (215 aa)) is b. A c region spans residues 559-626 (MLKQAGQAVP…YVKRVNALLV (68 aa)).

Belongs to the heat shock protein 90 family. Homodimer.

It is found in the cytoplasm. Functionally, molecular chaperone. Has ATPase activity. This chain is Chaperone protein HtpG, found in Polaromonas sp. (strain JS666 / ATCC BAA-500).